The sequence spans 311 residues: tRNA-cytidine(32) 2-sulfurtransferase (311 aa).

The PP-loop motif motif lies at Ser-47–Ser-52. [4Fe-4S] cluster-binding residues include Cys-122, Cys-125, and Cys-213.

It belongs to the TtcA family. As to quaternary structure, homodimer. Requires Mg(2+) as cofactor. It depends on [4Fe-4S] cluster as a cofactor.

It localises to the cytoplasm. The catalysed reaction is cytidine(32) in tRNA + S-sulfanyl-L-cysteinyl-[cysteine desulfurase] + AH2 + ATP = 2-thiocytidine(32) in tRNA + L-cysteinyl-[cysteine desulfurase] + A + AMP + diphosphate + H(+). The protein operates within tRNA modification. Its function is as follows. Catalyzes the ATP-dependent 2-thiolation of cytidine in position 32 of tRNA, to form 2-thiocytidine (s(2)C32). The sulfur atoms are provided by the cysteine/cysteine desulfurase (IscS) system. The chain is tRNA-cytidine(32) 2-sulfurtransferase from Shigella boydii serotype 18 (strain CDC 3083-94 / BS512).